Reading from the N-terminus, the 88-residue chain is Small ribosomal subunit protein uS17 (88 aa).

This sequence belongs to the universal ribosomal protein uS17 family. Part of the 30S ribosomal subunit.

One of the primary rRNA binding proteins, it binds specifically to the 5'-end of 16S ribosomal RNA. This Lactobacillus acidophilus (strain ATCC 700396 / NCK56 / N2 / NCFM) protein is Small ribosomal subunit protein uS17.